Here is a 336-residue protein sequence, read N- to C-terminus: Holliday junction branch migration complex subunit RuvB (336 aa).

The interval 1 to 182 is large ATPase domain (RuvB-L); that stretch reads MKERIVNLET…FGMSFRMQFY (182 aa). Residues Leu-21, Arg-22, Gly-63, Lys-66, Thr-67, Ser-68, 129–131, Arg-172, Tyr-182, and Arg-219 contribute to the ATP site; that span reads EDF. Thr-67 contributes to the Mg(2+) binding site. Residues 183–253 form a small ATPAse domain (RuvB-S) region; sequence SPSELALIIK…ITLHALNELG (71 aa). Residues 256–336 form a head domain (RuvB-H) region; sequence ELGFDEADLA…IPTLKSQTLF (81 aa). Residues Arg-310 and Arg-315 each coordinate DNA.

This sequence belongs to the RuvB family. In terms of assembly, homohexamer. Forms an RuvA(8)-RuvB(12)-Holliday junction (HJ) complex. HJ DNA is sandwiched between 2 RuvA tetramers; dsDNA enters through RuvA and exits via RuvB. An RuvB hexamer assembles on each DNA strand where it exits the tetramer. Each RuvB hexamer is contacted by two RuvA subunits (via domain III) on 2 adjacent RuvB subunits; this complex drives branch migration. In the full resolvosome a probable DNA-RuvA(4)-RuvB(12)-RuvC(2) complex forms which resolves the HJ.

It localises to the cytoplasm. It catalyses the reaction ATP + H2O = ADP + phosphate + H(+). Its function is as follows. The RuvA-RuvB-RuvC complex processes Holliday junction (HJ) DNA during genetic recombination and DNA repair, while the RuvA-RuvB complex plays an important role in the rescue of blocked DNA replication forks via replication fork reversal (RFR). RuvA specifically binds to HJ cruciform DNA, conferring on it an open structure. The RuvB hexamer acts as an ATP-dependent pump, pulling dsDNA into and through the RuvAB complex. RuvB forms 2 homohexamers on either side of HJ DNA bound by 1 or 2 RuvA tetramers; 4 subunits per hexamer contact DNA at a time. Coordinated motions by a converter formed by DNA-disengaged RuvB subunits stimulates ATP hydrolysis and nucleotide exchange. Immobilization of the converter enables RuvB to convert the ATP-contained energy into a lever motion, pulling 2 nucleotides of DNA out of the RuvA tetramer per ATP hydrolyzed, thus driving DNA branch migration. The RuvB motors rotate together with the DNA substrate, which together with the progressing nucleotide cycle form the mechanistic basis for DNA recombination by continuous HJ branch migration. Branch migration allows RuvC to scan DNA until it finds its consensus sequence, where it cleaves and resolves cruciform DNA. The polypeptide is Holliday junction branch migration complex subunit RuvB (Helicobacter pylori (strain HPAG1)).